Reading from the N-terminus, the 736-residue chain is Gingipain R2 (736 aa).

The N-terminal stretch at Met-1–Ala-24 is a signal peptide. Positions Gln-25 to Arg-229 are excised as a propeptide. Ca(2+) contacts are provided by Asp-307, Val-329, Asp-332, Tyr-334, Glu-336, Glu-390, and His-395. The Proton donor role is filled by His-440. Residue Cys-473 is the Nucleophile of the active site. Residues Phe-478, Glu-487, Asp-521, Glu-522, Glu-525, His-531, Asp-613, and Glu-639 each contribute to the Ca(2+) site.

This sequence belongs to the peptidase C25 family.

Its subcellular location is the secreted. It carries out the reaction Hydrolysis of proteins and small molecule substrates, with a preference for Arg in P1.. Its activity is regulated as follows. Inhibited by human histatin-3 1/24 (histatin-5). In terms of biological role, thiol protease. Acts synergistically with RgpA to catalyze the maturation of fimbrial subunits, such as FimA. Its proteolytic activity is a major factor in both periodontal tissue destruction and in evasion of host defense mechanisms. The sequence is that of Gingipain R2 (rgpB) from Porphyromonas gingivalis (strain ATCC BAA-308 / W83).